A 324-amino-acid chain; its full sequence is Glyoxylate/hydroxypyruvate reductase B (324 aa).

Active-site residues include Arg237 and Glu266. The active-site Proton donor is the His285.

Belongs to the D-isomer specific 2-hydroxyacid dehydrogenase family. GhrB subfamily. In terms of assembly, homodimer.

It is found in the cytoplasm. It catalyses the reaction glycolate + NADP(+) = glyoxylate + NADPH + H(+). The enzyme catalyses (R)-glycerate + NAD(+) = 3-hydroxypyruvate + NADH + H(+). The catalysed reaction is (R)-glycerate + NADP(+) = 3-hydroxypyruvate + NADPH + H(+). Functionally, catalyzes the NADPH-dependent reduction of glyoxylate and hydroxypyruvate into glycolate and glycerate, respectively. This Salmonella agona (strain SL483) protein is Glyoxylate/hydroxypyruvate reductase B.